The primary structure comprises 118 residues: Na(+)/H(+) antiporter subunit G1 (118 aa).

The next 3 membrane-spanning stretches (helical) occupy residues 4 to 24 (IILISLALIFVIIGALISALA), 38 to 58 (AHAAGKASTLGAMSLLFGTFL), and 60 to 80 (FIATQGFVNMQLIVAIIFVLI).

The protein belongs to the CPA3 antiporters (TC 2.A.63) subunit G family. May form a heterooligomeric complex that consists of seven subunits: mnhA1, mnhB1, mnhC1, mnhD1, mnhE1, mnhF1 and mnhG1.

Its subcellular location is the cell membrane. Its function is as follows. Mnh complex is a Na(+)/H(+) antiporter involved in Na(+) excretion. This chain is Na(+)/H(+) antiporter subunit G1 (mnhG1), found in Staphylococcus aureus (strain Mu3 / ATCC 700698).